We begin with the raw amino-acid sequence, 181 residues long: Trafficking protein particle complex subunit 3 homolog (181 aa).

Cys70 is lipidated: S-palmitoyl cysteine.

Belongs to the TRAPP small subunits family. BET3 subfamily. As to quaternary structure, homodimer. Part of the multisubunit TRAPP (transport protein particle) complex.

It localises to the golgi apparatus. The protein resides in the cis-Golgi network. Its subcellular location is the endoplasmic reticulum. In terms of biological role, may play a role in vesicular transport from endoplasmic reticulum to Golgi. Required for the systemic spread of the RNAi response. This chain is Trafficking protein particle complex subunit 3 homolog (trpp-3), found in Caenorhabditis elegans.